Consider the following 179-residue polypeptide: Transcription factor 21 (179 aa).

The tract at residues 20–86 is disordered; it reads CDGIKLDPNK…KQVQRNAANA (67 aa). The span at 34–46 shows a compositional bias: polar residues; the sequence is SNDSNEESSTCDN. Residues 50–64 are compositionally biased toward basic residues; it reads KKGRGTSGKRRKASS. Polar residues predominate over residues 70–80; sequence GTINQEGKQVQ. The bHLH domain maps to 79-131; that stretch reads VQRNAANARERARMRVLSKAFSRLKTTLPWVPPDTKLSKLDTLRLASSYIAHL.

As to quaternary structure, efficient DNA binding requires dimerization with another bHLH protein. As to expression, at the start of neurulation (stage 13), expressed in the pronephros. At tailbud stage (stage 25-28), expression is high in the anterior-most branchial arch and pronephric glomus. At stage 40, staining persists in the glomus and in the epicardium region of the heart, and at stage 42, expression is higher in the glomus than in the kidney tubule or duct. In adults, expression is highest in the rectum and the spleen, with significant expression in the duodenum, heart, kidney, lungs, pancreas, skin, liver and muscle.

Its subcellular location is the nucleus. Involved in epithelial-mesenchymal interactions in kidney and lung morphogenesis that include epithelial differentiation and branching morphogenesis. The sequence is that of Transcription factor 21 (tcf21) from Xenopus laevis (African clawed frog).